Here is a 342-residue protein sequence, read N- to C-terminus: NADH-quinone oxidoreductase subunit H 1 (342 aa).

8 helical membrane passes run 7–27 (FLLE…VIAM), 78–98 (ALFI…GAVI), 120–140 (IGVL…MIGG), 166–186 (MGLS…GEIV), 193–213 (WWNI…SFAE), 245–265 (LFAE…FYFG), 284–304 (ILGT…FMWV), and 322–342 (KIMI…ILLF).

This sequence belongs to the complex I subunit 1 family. In terms of assembly, NDH-1 is composed of 14 different subunits. Subunits NuoA, H, J, K, L, M, N constitute the membrane sector of the complex.

The protein resides in the cell inner membrane. It carries out the reaction a quinone + NADH + 5 H(+)(in) = a quinol + NAD(+) + 4 H(+)(out). In terms of biological role, NDH-1 shuttles electrons from NADH, via FMN and iron-sulfur (Fe-S) centers, to quinones in the respiratory chain. The immediate electron acceptor for the enzyme in this species is believed to be ubiquinone. Couples the redox reaction to proton translocation (for every two electrons transferred, four hydrogen ions are translocated across the cytoplasmic membrane), and thus conserves the redox energy in a proton gradient. This subunit may bind ubiquinone. This chain is NADH-quinone oxidoreductase subunit H 1, found in Cytophaga hutchinsonii (strain ATCC 33406 / DSM 1761 / CIP 103989 / NBRC 15051 / NCIMB 9469 / D465).